Here is a 158-residue protein sequence, read N- to C-terminus: Transcription elongation factor GreA (158 aa).

Residues 46 to 66 are a coiled coil; it reads AEYEAAKERQGFIEGRISELE.

This sequence belongs to the GreA/GreB family.

In terms of biological role, necessary for efficient RNA polymerase transcription elongation past template-encoded arresting sites. The arresting sites in DNA have the property of trapping a certain fraction of elongating RNA polymerases that pass through, resulting in locked ternary complexes. Cleavage of the nascent transcript by cleavage factors such as GreA or GreB allows the resumption of elongation from the new 3'terminus. GreA releases sequences of 2 to 3 nucleotides. The sequence is that of Transcription elongation factor GreA from Neisseria meningitidis serogroup A / serotype 4A (strain DSM 15465 / Z2491).